The primary structure comprises 120 residues: Large ribosomal subunit protein bL20 (120 aa).

This sequence belongs to the bacterial ribosomal protein bL20 family.

Functionally, binds directly to 23S ribosomal RNA and is necessary for the in vitro assembly process of the 50S ribosomal subunit. It is not involved in the protein synthesizing functions of that subunit. In Desulfitobacterium hafniense (strain DSM 10664 / DCB-2), this protein is Large ribosomal subunit protein bL20.